Consider the following 376-residue polypeptide: Hydroxylysine kinase (376 aa).

D229 (proton acceptor) is an active-site residue.

The protein belongs to the aminoglycoside phosphotransferase family.

It is found in the cytoplasm. It carries out the reaction (5R)-5-hydroxy-L-lysine + GTP = (5R)-5-phosphooxy-L-lysine + GDP + H(+). Functionally, catalyzes the GTP-dependent phosphorylation of 5-hydroxy-L-lysine. The polypeptide is Hydroxylysine kinase (Hykk) (Mus musculus (Mouse)).